The chain runs to 148 residues: Large ribosomal subunit protein bL9 (148 aa).

This sequence belongs to the bacterial ribosomal protein bL9 family.

In terms of biological role, binds to the 23S rRNA. The protein is Large ribosomal subunit protein bL9 of Staphylococcus saprophyticus subsp. saprophyticus (strain ATCC 15305 / DSM 20229 / NCIMB 8711 / NCTC 7292 / S-41).